We begin with the raw amino-acid sequence, 515 residues long: Cyclic AMP receptor-like protein G (515 aa).

Topologically, residues 1–16 are extracellular; the sequence is MSSIIFIPNDADNINS. Residues 17–37 traverse the membrane as a helical segment; that stretch reads IMVTISSSLSLVGCLFILSIY. Topologically, residues 38 to 50 are cytoplasmic; the sequence is IYYKELREFQLKL. Residues 51–71 form a helical membrane-spanning segment; it reads IFIMTINDFIISIIFLIATHI. The Extracellular portion of the chain corresponds to 72–92; sequence QTKYFDAITNVFPFFCNFPDS. The helical transmembrane segment at 93–113 threads the bilayer; that stretch reads LLHYFFLSSFFWEVCIAHTLI. The Cytoplasmic portion of the chain corresponds to 114 to 129; sequence QVIKYNNDKVEDNLKK. Residues 130 to 150 form a helical membrane-spanning segment; the sequence is YFIFSNGLSALIMVSLFFIRS. Over 151–164 the chain is Extracellular; the sequence is YSKIDCHHDSIFPH. A helical transmembrane segment spans residues 165-185; it reads LLFFIPLLLTWIYNIIVCALL. The Cytoplasmic portion of the chain corresponds to 186–276; that stretch reads TKTFKEQAMN…IRKTPNIIWT (91 aa). The helical transmembrane segment at 277 to 297 threads the bilayer; that stretch reads SIFFLFSFGFIWSWSILVIIL. Residues 298–306 are Extracellular-facing; sequence KYLSLDVKY. Residues 307–327 traverse the membrane as a helical segment; sequence ILMISYFFIPLHGCMNAVCFG. The Cytoplasmic segment spans residues 328–515; it reads VNDRLRMNLK…FCTIDEDETK (188 aa). A compositionally biased stretch (low complexity) spans 362–375; it reads NGNNKNNKNNNGAN. Disordered stretches follow at residues 362 to 409 and 469 to 515; these read NGNN…YYQI and NNNN…DETK. The segment covering 385–396 has biased composition (acidic residues); it reads SPDDDDDEDDDN. 2 stretches are compositionally biased toward low complexity: residues 397 to 407 and 469 to 504; these read NNNNYSDGNYY and NNNNNNNNNNNNNNNNNNNNNNINNNDNNNNNNNNN.

It belongs to the G-protein coupled receptor 5 family.

Its subcellular location is the membrane. Receptor for cAMP. In Dictyostelium discoideum (Social amoeba), this protein is Cyclic AMP receptor-like protein G (crlG).